Consider the following 232-residue polypeptide: dTTP/UTP pyrophosphatase (232 aa).

The Proton acceptor role is filled by Asp-103.

Belongs to the Maf family. YhdE subfamily. A divalent metal cation is required as a cofactor.

Its subcellular location is the cytoplasm. The enzyme catalyses dTTP + H2O = dTMP + diphosphate + H(+). The catalysed reaction is UTP + H2O = UMP + diphosphate + H(+). Its function is as follows. Nucleoside triphosphate pyrophosphatase that hydrolyzes dTTP and UTP. May have a dual role in cell division arrest and in preventing the incorporation of modified nucleotides into cellular nucleic acids. The polypeptide is dTTP/UTP pyrophosphatase (Bartonella henselae (strain ATCC 49882 / DSM 28221 / CCUG 30454 / Houston 1) (Rochalimaea henselae)).